The chain runs to 673 residues: Probable serine/threonine-protein kinase SCO3848 (673 aa).

The 267-residue stretch at 11–277 (YELGPVLGRG…EMRVDIEACL (267 aa)) folds into the Protein kinase domain. Residues 17–25 (LGRGGMAEV) and Lys40 contribute to the ATP site. Asp138 (proton acceptor) is an active-site residue. The segment at 302-345 (DQPTTALRSDGGGGATTMLPPMNPDDGGYGYDERPDRRRQQPRK) is disordered. PASTA domains follow at residues 379–445 (GNDK…VVST), 446–511 (GAPK…EVAK), 512–580 (AEEK…VVGK), and 581–649 (AVEK…MTVP). The tract at residues 472 to 500 (FEVETKQTESSQDEGTILSQNPDPGKELE) is disordered. Polar residues predominate over residues 479–493 (TESSQDEGTILSQNP). Disordered stretches follow at residues 613–641 (AQGSPGDDNAKVFASNPQPGSEVDDPAAT) and 653–673 (GNGNGGNGNGGAIAGLPGFGD).

The protein belongs to the protein kinase superfamily. Ser/Thr protein kinase family.

The enzyme catalyses L-seryl-[protein] + ATP = O-phospho-L-seryl-[protein] + ADP + H(+). It carries out the reaction L-threonyl-[protein] + ATP = O-phospho-L-threonyl-[protein] + ADP + H(+). This chain is Probable serine/threonine-protein kinase SCO3848, found in Streptomyces coelicolor (strain ATCC BAA-471 / A3(2) / M145).